The primary structure comprises 277 residues: Undecaprenyl-diphosphatase (277 aa).

Transmembrane regions (helical) follow at residues 47–67, 85–105, 108–128, 183–203, 218–238, and 249–269; these read FNII…RGKI, ANLL…ADLI, WLFN…VMLW, AATE…AVYS, VFAV…RALL, and FAWY…FHLI.

This sequence belongs to the UppP family.

The protein resides in the cell inner membrane. It carries out the reaction di-trans,octa-cis-undecaprenyl diphosphate + H2O = di-trans,octa-cis-undecaprenyl phosphate + phosphate + H(+). Catalyzes the dephosphorylation of undecaprenyl diphosphate (UPP). Confers resistance to bacitracin. This Pseudomonas aeruginosa (strain UCBPP-PA14) protein is Undecaprenyl-diphosphatase.